Consider the following 948-residue polypeptide: MSFNKLESFSNKEVIREEVSILTDLLTDVTRKILSPETFEKIAMMEDLAVHSKYQELKEIVEELTTEEMVYISRYFSILPLLINISEDVDLAYEINHQNNIDQDYLGKLSTTIDLISTRENAKEILENLNVVPVLTAHPTQVQRKTMLDLTNHIHTLLRQHRDVKAGLVNEKKWLGNLRRYIELMMQTDMIRDKKLKVTNEITNVMEYYNSSFLQAITNFMVEYKRLAEERGIKLDNPKPITMGMWIGGDRDGNPFVTAETLKLSATLQSEVILNYYIDKVYTLYRTFSLSTNLSETSQAVAEMAALSTDKSVYRENEPYRRAFHYIQSKLIQTLLYLKEGNFSNEGQRLTDRAEKTLSAKTTPSLSNKGREIIPNYIQSRISETLTELKKEETPSYKTAKEFKEDLQVIYDSLIEHHGEALVTGDLTELLQAVDVFGFFLASIDMRQDSSVHEACVAELLASANIVKDYSSLSEEEKCQVLLKQLLEDPRILSATHEPKSELLQKELEIFKTARQLKDALGEEVIKQNIISHSTSVSDLLELAIMLKEVGLIDENGTRVQIVPLFETIEDLDNSCETMEKYLSLPIAQKWIASKNNYQEIMLGYSDSNKDGGYLSSCWTLYKAQQQLTAIGDKFGVKITFFHGRGGTVGRGGGPTYEAITSQPLRSINDRIRLTEQGEVIGNKYGNKDAAYYNLEMLVSAAINRMVTHKKSDAHTSNKYERIMDQVVERSYQIYRDLVFGDERFYDYFFESSPIKAISSFNIGSRPAARKTITEIGGLRAIPWVFSWSQSRVMFPGWYGVGSSFKEFIDQDPENNLAFLQLMYKRWPFFKSLLSNVDMVLSKSNMNIAFEYAQLCEDQNVRDIFNIILDEWQLTKNVILEIEGHDELLAENTYLRDSLDYRMPYFNVLNYIQLELIKRQRNGQLTPDQEKLIHITINGIATGLRNSG.

Residues H138 and K610 contribute to the active site.

The protein belongs to the PEPCase type 1 family. It depends on Mg(2+) as a cofactor.

The enzyme catalyses oxaloacetate + phosphate = phosphoenolpyruvate + hydrogencarbonate. Its function is as follows. Forms oxaloacetate, a four-carbon dicarboxylic acid source for the tricarboxylic acid cycle. In Streptococcus gordonii (strain Challis / ATCC 35105 / BCRC 15272 / CH1 / DL1 / V288), this protein is Phosphoenolpyruvate carboxylase.